Reading from the N-terminus, the 298-residue chain is 4-hydroxy-tetrahydrodipicolinate synthase (298 aa).

T48 is a pyruvate binding site. The active-site Proton donor/acceptor is the Y137. Catalysis depends on K166, which acts as the Schiff-base intermediate with substrate. I207 provides a ligand contact to pyruvate.

This sequence belongs to the DapA family. As to quaternary structure, homotetramer; dimer of dimers.

It localises to the cytoplasm. The catalysed reaction is L-aspartate 4-semialdehyde + pyruvate = (2S,4S)-4-hydroxy-2,3,4,5-tetrahydrodipicolinate + H2O + H(+). Its pathway is amino-acid biosynthesis; L-lysine biosynthesis via DAP pathway; (S)-tetrahydrodipicolinate from L-aspartate: step 3/4. Its function is as follows. Catalyzes the condensation of (S)-aspartate-beta-semialdehyde [(S)-ASA] and pyruvate to 4-hydroxy-tetrahydrodipicolinate (HTPA). The polypeptide is 4-hydroxy-tetrahydrodipicolinate synthase (Campylobacter lari (strain RM2100 / D67 / ATCC BAA-1060)).